Consider the following 130-residue polypeptide: Small ribosomal subunit protein uS8 (130 aa).

This sequence belongs to the universal ribosomal protein uS8 family. In terms of assembly, part of the 30S ribosomal subunit. Contacts proteins S5 and S12.

One of the primary rRNA binding proteins, it binds directly to 16S rRNA central domain where it helps coordinate assembly of the platform of the 30S subunit. The sequence is that of Small ribosomal subunit protein uS8 from Cereibacter sphaeroides (strain KD131 / KCTC 12085) (Rhodobacter sphaeroides).